The following is a 358-amino-acid chain: Nicotinate-nucleotide--dimethylbenzimidazole phosphoribosyltransferase (358 aa).

Catalysis depends on Glu313, which acts as the Proton acceptor.

The protein belongs to the CobT family.

It carries out the reaction 5,6-dimethylbenzimidazole + nicotinate beta-D-ribonucleotide = alpha-ribazole 5'-phosphate + nicotinate + H(+). The protein operates within nucleoside biosynthesis; alpha-ribazole biosynthesis; alpha-ribazole from 5,6-dimethylbenzimidazole: step 1/2. Functionally, catalyzes the synthesis of alpha-ribazole-5'-phosphate from nicotinate mononucleotide (NAMN) and 5,6-dimethylbenzimidazole (DMB). The sequence is that of Nicotinate-nucleotide--dimethylbenzimidazole phosphoribosyltransferase from Corynebacterium glutamicum (strain R).